Here is an 82-residue protein sequence, read N- to C-terminus: uncharacterized protein (82 aa).

A compositionally biased stretch (basic and acidic residues) spans M1–S11. The tract at residues M1–R25 is disordered. Over residues S16 to R25 the composition is skewed to polar residues.

This is an uncharacterized protein from Human cytomegalovirus (strain AD169) (HHV-5).